The sequence spans 442 residues: Proline--tRNA ligase (442 aa).

Belongs to the class-II aminoacyl-tRNA synthetase family. ProS type 2 subfamily. In terms of assembly, homodimer.

It is found in the cytoplasm. It carries out the reaction tRNA(Pro) + L-proline + ATP = L-prolyl-tRNA(Pro) + AMP + diphosphate. Functionally, catalyzes the attachment of proline to tRNA(Pro) in a two-step reaction: proline is first activated by ATP to form Pro-AMP and then transferred to the acceptor end of tRNA(Pro). This is Proline--tRNA ligase from Brucella ovis (strain ATCC 25840 / 63/290 / NCTC 10512).